We begin with the raw amino-acid sequence, 121 residues long: Large ribosomal subunit protein bL12 (121 aa).

This sequence belongs to the bacterial ribosomal protein bL12 family. In terms of assembly, homodimer. Part of the ribosomal stalk of the 50S ribosomal subunit. Forms a multimeric L10(L12)X complex, where L10 forms an elongated spine to which 2 to 4 L12 dimers bind in a sequential fashion. Binds GTP-bound translation factors.

In terms of biological role, forms part of the ribosomal stalk which helps the ribosome interact with GTP-bound translation factors. Is thus essential for accurate translation. This Bacillus pumilus (strain SAFR-032) protein is Large ribosomal subunit protein bL12.